Here is a 982-residue protein sequence, read N- to C-terminus: E3 ubiquitin-protein ligase CBL-B (982 aa).

Residues 35-167 (PPKQAAADRR…KAIFPNGQFQ (133 aa)) are 4H. One can recognise a Cbl-PTB domain in the interval 35–343 (PPKQAAADRR…GRSYNPDLTG (309 aa)). The segment at 168 to 240 (GDNFRITKAD…FEFDIFTRLF (73 aa)) is EF-hand-like. Ca(2+) is bound by residues aspartate 221, threonine 223, asparagine 225, tyrosine 227, and glutamate 232. The SH2-like stretch occupies residues 241 to 343 (QPWGSILRNW…GRSYNPDLTG (103 aa)). A Phosphoserine; by PKC/PRKCQ modification is found at serine 282. Arginine 286 provides a ligand contact to 4-O-phospho-L-tyrosine. The tract at residues 344–372 (LCEPTPHDHIKVTQEQYELYCEMGSTFQL) is linker. Tyrosine 363 carries the post-translational modification Phosphotyrosine. The segment at 373–412 (CKICAENDKDVKIEPCGHLMCTSCLTAWQESDGQGCPFCR) adopts an RING-type zinc-finger fold. Residues 466–571 (NVRKCTDRQN…PPPIPPDNRL (106 aa)) form a disordered region. Residues 473–486 (RQNSPVTSPGSSPL) show a composition bias toward polar residues. Phosphoserine occurs at positions 476, 480, 484, 521, 525, and 529. The segment at 543–568 (PLPAPPPPLRDPPPPPPERPPPIPPD) is interaction with VAV1. The segment covering 544–567 (LPAPPPPLRDPPPPPPERPPPIPP) has biased composition (pro residues). Phosphoserine is present on serine 634. Tyrosine 665 and tyrosine 709 each carry phosphotyrosine. Disordered stretches follow at residues 688-731 (GPLA…NVKP) and 769-929 (FDSA…EAAL). Over residues 715-725 (HPVSLNSQPSH) the composition is skewed to polar residues. The span at 819 to 828 (PSLPPPPPPA) shows a compositional bias: pro residues. Residues 838 to 848 (PPGSSSRPSSG) show a composition bias toward low complexity. Residues 880 to 899 (VKTNRTSQDYDQLPSCSDGS) show a composition bias toward polar residues. Position 889 is a phosphotyrosine (tyrosine 889). The segment at 891–927 (QLPSCSDGSQAPARPPKPRPRRTAPEIHHRKPHGPEA) is interaction with SH3KBP1. The span at 906–922 (PKPRPRRTAPEIHHRKP) shows a compositional bias: basic residues. The 40-residue stretch at 931 to 970 (NVDAKIAKLMGEGYAFEEVKRALEIAQNNVEVARSILREF) folds into the UBA domain.

In terms of assembly, interacts with SH3 domain-containing proteins LCK, CRK and SORBS1. Interacts with LCP2 and ZAP70. Interacts with CBL. Interacts with SH3 domain-containing proteins VAV1, FYN, FGR, PLCG1, GRB2, CRKL, PIK3R1 and SH3KBP1/CIN85. Identified in heterotrimeric complexes with SH3KBP1/CIN85, CD2AP and ARHGEF7, where one CBLB peptide binds two copies of the other protein. Interacts with poly-ubiquitinated proteins. Dimerization is required for the binding of poly-ubiquitin, but not for the binding of mono-ubiquitin. Interacts with EGFR (phosphorylated). Interacts with IFT20. Phosphorylated on tyrosine and serine residues upon TCR or BCR activation, and upon various types of cell stimulation. In terms of processing, auto-ubiquitinated upon EGF-mediated cell activation or upon T-cell costimulation by CD28; which promotes proteasomal degradation. Expressed in placenta, heart, lung, kidney, spleen, ovary and testis, as well as fetal brain and liver and hematopoietic cell lines, but not in adult brain, liver, pancreas, salivary gland, or skeletal muscle. Present in lymphocytes (at protein level).

It localises to the cytoplasm. It carries out the reaction S-ubiquitinyl-[E2 ubiquitin-conjugating enzyme]-L-cysteine + [acceptor protein]-L-lysine = [E2 ubiquitin-conjugating enzyme]-L-cysteine + N(6)-ubiquitinyl-[acceptor protein]-L-lysine.. It functions in the pathway protein modification; protein ubiquitination. Its function is as follows. E3 ubiquitin-protein ligase which accepts ubiquitin from specific E2 ubiquitin-conjugating enzymes, and transfers it to substrates, generally promoting their degradation by the proteasome. Negatively regulates TCR (T-cell receptor), BCR (B-cell receptor) and FCER1 (high affinity immunoglobulin epsilon receptor) signal transduction pathways. In naive T-cells, inhibits VAV1 activation upon TCR engagement and imposes a requirement for CD28 costimulation for proliferation and IL-2 production. Also acts by promoting PIK3R1/p85 ubiquitination, which impairs its recruitment to the TCR and subsequent activation. In activated T-cells, inhibits PLCG1 activation and calcium mobilization upon restimulation and promotes anergy. In B-cells, acts by ubiquitinating SYK and promoting its proteasomal degradation. Slightly promotes SRC ubiquitination. May be involved in EGFR ubiquitination and internalization. May be functionally coupled with the E2 ubiquitin-protein ligase UB2D3. In association with CBL, required for proper feedback inhibition of ciliary platelet-derived growth factor receptor-alpha (PDGFRA) signaling pathway via ubiquitination and internalization of PDGFRA. The polypeptide is E3 ubiquitin-protein ligase CBL-B (CBLB) (Homo sapiens (Human)).